The sequence spans 226 residues: Glycerol-3-phosphate acyltransferase (226 aa).

A run of 6 helical transmembrane segments spans residues 1–21, 60–80, 102–122, 134–154, 159–178, and 182–197; these read MGFWLSLCGAVVLVAYLLGSF, FVLGLDCLKGVLAIALVYYLF, LVTLAGIAAILGHSKSIFLGF, ILLAMNWQVGLATFGVFAVVV, IVSLSSIMGAIAVSIVMVFL, and LPYILFGIAGGLYVIL.

This sequence belongs to the PlsY family. As to quaternary structure, probably interacts with PlsX.

The protein resides in the cell inner membrane. The enzyme catalyses an acyl phosphate + sn-glycerol 3-phosphate = a 1-acyl-sn-glycero-3-phosphate + phosphate. It participates in lipid metabolism; phospholipid metabolism. In terms of biological role, catalyzes the transfer of an acyl group from acyl-phosphate (acyl-PO(4)) to glycerol-3-phosphate (G3P) to form lysophosphatidic acid (LPA). This enzyme utilizes acyl-phosphate as fatty acyl donor, but not acyl-CoA or acyl-ACP. The polypeptide is Glycerol-3-phosphate acyltransferase (Nostoc sp. (strain PCC 7120 / SAG 25.82 / UTEX 2576)).